Consider the following 26-residue polypeptide: Guentherin (26 aa).

Expressed by the skin glands.

It is found in the secreted. In terms of biological role, antimicrobial peptide. Active against the Gram-positive bacteria S.aureus FDA209P (MIC=35.5 ug/ml) and B.subtilis ATCC 6633 (MIC&gt;64 ug/ml), but not active against the Gram-negative bacterium E.coli or the fungus C.albicans. The polypeptide is Guentherin (Sylvirana guentheri (Gunther's frog)).